The sequence spans 808 residues: Phenylalanine--tRNA ligase beta subunit (808 aa).

Residues 40–149 (RPELDFVKIV…DQAEVGKTIR (110 aa)) form the tRNA-binding domain. Residues 407-484 (HKEVRIHTDI…RTKGYDTIQV (78 aa)) form the B5 domain. Mg(2+)-binding residues include Asp-462, Asp-468, Glu-471, and Glu-472. The FDX-ACB domain maps to 716–808 (SQFPEAEIDL…LAGKNGFVLR (93 aa)).

It belongs to the phenylalanyl-tRNA synthetase beta subunit family. Type 1 subfamily. Tetramer of two alpha and two beta subunits. Mg(2+) is required as a cofactor.

It localises to the cytoplasm. It catalyses the reaction tRNA(Phe) + L-phenylalanine + ATP = L-phenylalanyl-tRNA(Phe) + AMP + diphosphate + H(+). The polypeptide is Phenylalanine--tRNA ligase beta subunit (Leptospira interrogans serogroup Icterohaemorrhagiae serovar copenhageni (strain Fiocruz L1-130)).